Consider the following 251-residue polypeptide: uncharacterized protein (251 aa).

This is an uncharacterized protein from Bacillus subtilis (strain 168).